Reading from the N-terminus, the 648-residue chain is Rab11 family-interacting protein 1 (648 aa).

Residues 1–129 (MSLAASAGRG…DQSRRKKQWY (129 aa)) form the C2 domain. Basic and acidic residues predominate over residues 164 to 188 (SMKDKSRNPFGKLKDKIKGKNKDNT). 3 disordered regions span residues 164–470 (SMKD…GRKG), 483–503 (VRRPEKDAVPVASQWGSSQNP), and 516–555 (VESKCEPKPPVPVPRTPQTRAVKPRPHPVKPMNTTAPKIT). The span at 189–201 (SDTASAIVPSTTP) shows a compositional bias: polar residues. Phosphoserine occurs at positions 205, 209, and 237. Composition is skewed to polar residues over residues 227–242 (PSLQKTPLSQSMSVLP) and 271–296 (SSASEVMSQKRTSSTDHTQPNQSNFS). Phosphoserine is present on residues S304, S319, S343, S345, S347, S349, S360, S361, and S386. Residues 314–323 (DSLSRSNVCI) show a composition bias toward polar residues. Basic and acidic residues-rich tracts occupy residues 381–394 (SDRRLSDSSTKDSM) and 422–436 (ATKETKDSKKQESKK). S438 is subject to Phosphoserine. Basic and acidic residues predominate over residues 445–454 (GKKDVAKGSE). In terms of domain architecture, FIP-RBD spans 576 to 638 (KKYQPSDPAF…EETPNILRVP (63 aa)). The necessary for interaction with RAB4A and RAB11A, subcellular location and endosomal recycling stretch occupies residues 584–648 (AFAYAQLTHD…AQTGKKAGKM (65 aa)).

Homooligomer. Interacts with RAB11A, RAB11B, RAB25, RAB4A and RAB14.

Its subcellular location is the recycling endosome. It is found in the cytoplasmic vesicle. In terms of biological role, a Rab11 effector protein involved in the endosomal recycling process. Also involved in controlling membrane trafficking along the phagocytic pathway and in phagocytosis. Interaction with RAB14 may function in the process of neurite formation. The protein is Rab11 family-interacting protein 1 of Rattus norvegicus (Rat).